A 1551-amino-acid polypeptide reads, in one-letter code: Pentafunctional AROM polypeptide (1551 aa).

Residues 1–379 (MSIEKVPILG…YQLKAHEVSK (379 aa)) are 3-dehydroquinate synthase. NAD(+)-binding positions include 42–44 (DTN), 80–83 (ENNK), 111–113 (GGV), and Asp-116. Arg-127 contributes to the 7-phospho-2-dehydro-3-deoxy-D-arabino-heptonate binding site. 136–137 (TT) provides a ligand contact to NAD(+). 7-phospho-2-dehydro-3-deoxy-D-arabino-heptonate contacts are provided by Asp-143 and Lys-149. Lys-158 contacts NAD(+). Asn-159 provides a ligand contact to 7-phospho-2-dehydro-3-deoxy-D-arabino-heptonate. NAD(+) is bound by residues 176–179 (YLES) and Asn-187. Residue Glu-191 participates in Zn(2+) binding. 7-phospho-2-dehydro-3-deoxy-D-arabino-heptonate-binding positions include 191–194 (EVVK) and Lys-243. The active-site Proton acceptor; for 3-dehydroquinate synthase activity is the Glu-253. 7-phospho-2-dehydro-3-deoxy-D-arabino-heptonate contacts are provided by residues 257 to 261 (RNLLN) and His-264. His-264 serves as a coordination point for Zn(2+). His-268 (proton acceptor; for 3-dehydroquinate synthase activity) is an active-site residue. 7-phospho-2-dehydro-3-deoxy-D-arabino-heptonate contacts are provided by His-280 and Lys-351. His-280 lines the Zn(2+) pocket. The segment at 392 to 838 (VHPFKQPPQE…WDILHSKFNI (447 aa)) is EPSP synthase. Residues 858–1048 (DKSIIIIGMR…IPSGRSAALS (191 aa)) form a shikimate kinase region. Residue 865 to 872 (GMRGTGKS) participates in ATP binding. Residues 1049–1258 (LTVPDLNAIS…NEDGLLTIKE (210 aa)) are 3-dehydroquinase. Catalysis depends on Lys-1194, which acts as the Schiff-base intermediate with substrate; for 3-dehydroquinate dehydratase activity. Residues 1271–1551 (AKKFWVIGSP…DVIHRAVVEE (281 aa)) are shikimate dehydrogenase.

It in the N-terminal section; belongs to the sugar phosphate cyclases superfamily. Dehydroquinate synthase family. In the 2nd section; belongs to the EPSP synthase family. This sequence in the 3rd section; belongs to the shikimate kinase family. The protein in the 4th section; belongs to the type-I 3-dehydroquinase family. It in the C-terminal section; belongs to the shikimate dehydrogenase family. As to quaternary structure, homodimer. Requires Zn(2+) as cofactor.

It is found in the cytoplasm. The catalysed reaction is 7-phospho-2-dehydro-3-deoxy-D-arabino-heptonate = 3-dehydroquinate + phosphate. It catalyses the reaction 3-dehydroquinate = 3-dehydroshikimate + H2O. The enzyme catalyses shikimate + NADP(+) = 3-dehydroshikimate + NADPH + H(+). It carries out the reaction shikimate + ATP = 3-phosphoshikimate + ADP + H(+). The catalysed reaction is 3-phosphoshikimate + phosphoenolpyruvate = 5-O-(1-carboxyvinyl)-3-phosphoshikimate + phosphate. The protein operates within metabolic intermediate biosynthesis; chorismate biosynthesis; chorismate from D-erythrose 4-phosphate and phosphoenolpyruvate: step 2/7. It functions in the pathway metabolic intermediate biosynthesis; chorismate biosynthesis; chorismate from D-erythrose 4-phosphate and phosphoenolpyruvate: step 3/7. Its pathway is metabolic intermediate biosynthesis; chorismate biosynthesis; chorismate from D-erythrose 4-phosphate and phosphoenolpyruvate: step 4/7. It participates in metabolic intermediate biosynthesis; chorismate biosynthesis; chorismate from D-erythrose 4-phosphate and phosphoenolpyruvate: step 5/7. The protein operates within metabolic intermediate biosynthesis; chorismate biosynthesis; chorismate from D-erythrose 4-phosphate and phosphoenolpyruvate: step 6/7. In terms of biological role, the AROM polypeptide catalyzes 5 consecutive enzymatic reactions in prechorismate polyaromatic amino acid biosynthesis. In Candida tropicalis (strain ATCC MYA-3404 / T1) (Yeast), this protein is Pentafunctional AROM polypeptide.